Here is a 623-residue protein sequence, read N- to C-terminus: DNA polymerase alpha subunit B (623 aa).

Residues 113–151 (IPKIKDEPSSSVDVSTARNKNNHNNNNNNNPSLPNKSMF) are disordered. Positions 121–130 (SSSVDVSTAR) are enriched in polar residues.

It belongs to the DNA polymerase alpha subunit B family. DNA polymerase alpha:primase is a four subunit enzyme complex, which is assembled throughout the cell cycle, and consists of the two DNA polymerase subunits A and B, and the DNA primase large and small subunits. Subunit B binds to subunit A.

It is found in the nucleus. May play an essential role at the early stage of chromosomal DNA replication by coupling the polymerase alpha/primase complex to the cellular replication machinery. This chain is DNA polymerase alpha subunit B (polA2), found in Dictyostelium discoideum (Social amoeba).